The chain runs to 121 residues: Small ribosomal subunit protein uS13 (121 aa).

The disordered stretch occupies residues 90–121 (RHRHGLPVRGQHTKNNARTRKGKAVAIAGKKK).

The protein belongs to the universal ribosomal protein uS13 family. In terms of assembly, part of the 30S ribosomal subunit. Forms a loose heterodimer with protein S19. Forms two bridges to the 50S subunit in the 70S ribosome.

In terms of biological role, located at the top of the head of the 30S subunit, it contacts several helices of the 16S rRNA. In the 70S ribosome it contacts the 23S rRNA (bridge B1a) and protein L5 of the 50S subunit (bridge B1b), connecting the 2 subunits; these bridges are implicated in subunit movement. Contacts the tRNAs in the A and P-sites. In Limosilactobacillus fermentum (strain NBRC 3956 / LMG 18251) (Lactobacillus fermentum), this protein is Small ribosomal subunit protein uS13.